Reading from the N-terminus, the 115-residue chain is Nucleoid-associated protein Ccel_0243 (115 aa).

This sequence belongs to the YbaB/EbfC family. In terms of assembly, homodimer.

It is found in the cytoplasm. Its subcellular location is the nucleoid. Its function is as follows. Binds to DNA and alters its conformation. May be involved in regulation of gene expression, nucleoid organization and DNA protection. In Ruminiclostridium cellulolyticum (strain ATCC 35319 / DSM 5812 / JCM 6584 / H10) (Clostridium cellulolyticum), this protein is Nucleoid-associated protein Ccel_0243.